A 287-amino-acid polypeptide reads, in one-letter code: mRNA-capping enzyme small subunit (287 aa).

In terms of assembly, heterodimer of a large and a small subunit.

It localises to the virion. The enzyme catalyses a 5'-end (5'-triphosphoguanosine)-ribonucleoside in mRNA + S-adenosyl-L-methionine = a 5'-end (N(7)-methyl 5'-triphosphoguanosine)-ribonucleoside in mRNA + S-adenosyl-L-homocysteine. Catalyzes the last reaction in the mRNA cap formation pathway. The protein is mRNA-capping enzyme small subunit of Sus scrofa (Pig).